Consider the following 444-residue polypeptide: Signal recognition particle 54 kDa protein (444 aa).

Residues 104–111 (GLQGSGKT), 184–188 (DTAGR), and 242–245 (TKLD) contribute to the GTP site.

This sequence belongs to the GTP-binding SRP family. SRP54 subfamily. In terms of assembly, part of the signal recognition particle protein translocation system, which is composed of SRP and FtsY. Archaeal SRP consists of a 7S RNA molecule of 300 nucleotides and two protein subunits: SRP54 and SRP19.

Its subcellular location is the cytoplasm. It carries out the reaction GTP + H2O = GDP + phosphate + H(+). Involved in targeting and insertion of nascent membrane proteins into the cytoplasmic membrane. Binds to the hydrophobic signal sequence of the ribosome-nascent chain (RNC) as it emerges from the ribosomes. The SRP-RNC complex is then targeted to the cytoplasmic membrane where it interacts with the SRP receptor FtsY. The chain is Signal recognition particle 54 kDa protein from Methanothrix thermoacetophila (strain DSM 6194 / JCM 14653 / NBRC 101360 / PT) (Methanosaeta thermophila).